The following is a 146-amino-acid chain: Wheatwin-1 (146 aa).

The N-terminal stretch at 1 to 21 (MAARPMLVVALLCAAAAAATA) is a signal peptide. Glutamine 22 carries the pyrrolidone carboxylic acid modification. The Barwin domain occupies 22 to 146 (QQATNVRATY…VNYQFVDCRD (125 aa)). 3 cysteine pairs are disulfide-bonded: cysteine 52-cysteine 84, cysteine 73-cysteine 107, and cysteine 87-cysteine 144.

As to quaternary structure, monomer.

Inhibited by 5'-ADP. Functionally, shows antifungal activity towards B.cinerea and towards the wheat-specific pathogenic fungi F.culmorum and F.graminearum (groups 1 and 2). Has ribonuclease activity. The protein is Wheatwin-1 (PR4A) of Triticum aestivum (Wheat).